A 213-amino-acid polypeptide reads, in one-letter code: MKNIADIRQEYTKSGLRESELPCDPLSLFSRWLQEAIDANVEEPTAIIVGTVSPEGRPSTRTVLLKGLHDGKFIFYTNYESRKGRQLAQNPYISLSFVWHELERQVHIEGTAAKVSPEESDEYFRKRPYKSRIGARISPQSQPIASRMQLIRAFVKEAARWLGKEVERPDNWGGYAVTPTRMEFWQGRPNRLHDRFLYTLKTDGKWEINRLSP.

Residues 8 to 11 (RQEY) and K66 each bind substrate. FMN contacts are provided by residues 61–66 (RTVLLK), 76–77 (YT), R82, K83, and Q105. Substrate is bound by residues Y123, R127, and S131. Residues 140 to 141 (QS) and W185 each bind FMN. 191 to 193 (RLH) serves as a coordination point for substrate. R195 provides a ligand contact to FMN.

Belongs to the pyridoxamine 5'-phosphate oxidase family. Homodimer. The cofactor is FMN.

The catalysed reaction is pyridoxamine 5'-phosphate + O2 + H2O = pyridoxal 5'-phosphate + H2O2 + NH4(+). It catalyses the reaction pyridoxine 5'-phosphate + O2 = pyridoxal 5'-phosphate + H2O2. It participates in cofactor metabolism; pyridoxal 5'-phosphate salvage; pyridoxal 5'-phosphate from pyridoxamine 5'-phosphate: step 1/1. The protein operates within cofactor metabolism; pyridoxal 5'-phosphate salvage; pyridoxal 5'-phosphate from pyridoxine 5'-phosphate: step 1/1. In terms of biological role, catalyzes the oxidation of either pyridoxine 5'-phosphate (PNP) or pyridoxamine 5'-phosphate (PMP) into pyridoxal 5'-phosphate (PLP). This is Pyridoxine/pyridoxamine 5'-phosphate oxidase from Bacteroides thetaiotaomicron (strain ATCC 29148 / DSM 2079 / JCM 5827 / CCUG 10774 / NCTC 10582 / VPI-5482 / E50).